Here is a 297-residue protein sequence, read N- to C-terminus: Urease accessory protein UreD (297 aa).

Residues 1 to 41 are disordered; that stretch reads MPQAADIATAPQRPSAPGDVVAAGQPPRARGRAHVSSKRRD.

Belongs to the UreD family. As to quaternary structure, ureD, UreF and UreG form a complex that acts as a GTP-hydrolysis-dependent molecular chaperone, activating the urease apoprotein by helping to assemble the nickel containing metallocenter of UreC. The UreE protein probably delivers the nickel.

The protein localises to the cytoplasm. Required for maturation of urease via the functional incorporation of the urease nickel metallocenter. This is Urease accessory protein UreD from Ruegeria sp. (strain TM1040) (Silicibacter sp.).